The primary structure comprises 180 residues: Pro-glucagon (180 aa).

The first 20 residues, 1–20 (MKTIYFVAGLFVMLVQGSWQ), serve as a signal peptide directing secretion. A disordered region spans residues 25 to 59 (NTEEKSRSFPAPQTDPLDDPDQMTEDKRHSQGTFT). Ser54 carries the post-translational modification Phosphoserine. Residues 84–89 (NKNNIA) constitute a propeptide that is removed on maturation. Phosphoserine is present on residues Ser105 and Ser108. Arg127 carries the arginine amide modification. Residues 131–145 (DFPEEVTIVEELRRR) constitute a propeptide that is removed on maturation. 2 positions are modified to phosphoserine: Ser150 and Ser152.

Belongs to the glucagon family. Post-translationally, proglucagon is post-translationally processed in a tissue-specific manner in pancreatic A cells and intestinal L cells. In pancreatic A cells, the major bioactive hormone is glucagon cleaved by PCSK2/PC2. In the intestinal L cells PCSK1/PC1 liberates GLP-1, GLP-2, glicentin and oxyntomodulin. GLP-1 is further N-terminally truncated by post-translational processing in the intestinal L cells resulting in GLP-1(7-37) GLP-1-(7-36)amide. The C-terminal amidation is neither important for the metabolism of GLP-1 nor for its effects on the endocrine pancreas. As to expression, glucagon is secreted in the A cells of the islets of Langerhans. GLP-1, GLP-2, oxyntomodulin and glicentin are secreted from enteroendocrine cells throughout the gastrointestinal tract. GLP-1 and GLP-2 are also secreted in selected neurons in the brain.

It localises to the secreted. Functionally, plays a key role in glucose metabolism and homeostasis. Regulates blood glucose by increasing gluconeogenesis and decreasing glycolysis. A counterregulatory hormone of insulin, raises plasma glucose levels in response to insulin-induced hypoglycemia. Plays an important role in initiating and maintaining hyperglycemic conditions in diabetes. In terms of biological role, potent stimulator of glucose-dependent insulin release. Also stimulates insulin release in response to IL6. Plays important roles on gastric motility and the suppression of plasma glucagon levels. May be involved in the suppression of satiety and stimulation of glucose disposal in peripheral tissues, independent of the actions of insulin. Has growth-promoting activities on intestinal epithelium. May also regulate the hypothalamic pituitary axis (HPA) via effects on LH, TSH, CRH, oxytocin, and vasopressin secretion. Increases islet mass through stimulation of islet neogenesis and pancreatic beta cell proliferation. Inhibits beta cell apoptosis. Its function is as follows. Stimulates intestinal growth and up-regulates villus height in the small intestine, concomitant with increased crypt cell proliferation and decreased enterocyte apoptosis. The gastrointestinal tract, from the stomach to the colon is the principal target for GLP-2 action. Plays a key role in nutrient homeostasis, enhancing nutrient assimilation through enhanced gastrointestinal function, as well as increasing nutrient disposal. Stimulates intestinal glucose transport and decreases mucosal permeability. Significantly reduces food intake. Inhibits gastric emptying in humans. Suppression of gastric emptying may lead to increased gastric distension, which may contribute to satiety by causing a sensation of fullness. Functionally, may modulate gastric acid secretion and the gastro-pyloro-duodenal activity. May play an important role in intestinal mucosal growth in the early period of life. This Sus scrofa (Pig) protein is Pro-glucagon (GCG).